The sequence spans 235 residues: Phosphoribosylaminoimidazole-succinocarboxamide synthase (235 aa).

Belongs to the SAICAR synthetase family.

It carries out the reaction 5-amino-1-(5-phospho-D-ribosyl)imidazole-4-carboxylate + L-aspartate + ATP = (2S)-2-[5-amino-1-(5-phospho-beta-D-ribosyl)imidazole-4-carboxamido]succinate + ADP + phosphate + 2 H(+). The protein operates within purine metabolism; IMP biosynthesis via de novo pathway; 5-amino-1-(5-phospho-D-ribosyl)imidazole-4-carboxamide from 5-amino-1-(5-phospho-D-ribosyl)imidazole-4-carboxylate: step 1/2. The chain is Phosphoribosylaminoimidazole-succinocarboxamide synthase from Clostridium novyi (strain NT).